Reading from the N-terminus, the 575-residue chain is 4-substituted benzoates-glutamate ligase GH3.12 (575 aa).

Positions D6–I33 form a coiled coil. S95–S96 contributes to the AMP binding site. Y120–R123 provides a ligand contact to salicylate. Positions 301, 324, 328, 347, 398, and 417 each coordinate AMP.

This sequence belongs to the IAA-amido conjugating enzyme family. Interacts with the P.syringae pv. maculicola effector HopW1-1 (via C-terminus). As to expression, expressed in seedlings, mostly in cotyledons, leaves, hypocotyls and sporadically in roots. Not detected in unchallenged adult plants, except in flowers.

Its activity is regulated as follows. Specifically and reversibly inhibited by salicylic acid (SA). In terms of biological role, catalyzes the conjugation of specific amino acids (e.g. Glu and possibly His, Lys, and Met) to their preferred acyl substrates (e.g. 4-substituted benzoates), in a magnesium ion- and ATP-dependent manner. Can use 4-substituted benzoates such as 4-aminobenzoate (pABA), 4-fluorobenzoate and 4-hydroxybenzoate (4-HBA), and, to a lesser extent, benzoate, vanillate and trans-cinnamate, but not 2-substituted benzoates and salicylic acid (SA), as conjugating acyl substrates. Involved in both basal and induced resistance in a SA-dependent manner. Confers resistance to virulent and avirulent pathogens (at least bacteria and oomycetes), and promotes SA glucosides accumulation. Required for the establishment of hyper-sensitive response (HR) upon incompatible interaction and subsequent systemic acquired resistance (SAR). This Arabidopsis thaliana (Mouse-ear cress) protein is 4-substituted benzoates-glutamate ligase GH3.12 (GH3.12).